A 576-amino-acid chain; its full sequence is Lysine--tRNA ligase, mitochondrial (576 aa).

Residues 1–30 (MNVLLKRRSLTFAPRWLWCKCRSSRSRPYS) constitute a mitochondrion transit peptide.

Belongs to the class-II aminoacyl-tRNA synthetase family.

The protein resides in the mitochondrion matrix. The catalysed reaction is tRNA(Lys) + L-lysine + ATP = L-lysyl-tRNA(Lys) + AMP + diphosphate. Catalyzes the attachment of lysine to tRNA(Lys) in the mitochondrion. This Saccharomyces cerevisiae (strain ATCC 204508 / S288c) (Baker's yeast) protein is Lysine--tRNA ligase, mitochondrial (MSK1).